Reading from the N-terminus, the 535-residue chain is Dimethylaniline monooxygenase [N-oxide-forming] 2 (535 aa).

FAD is bound by residues 9 to 13 (GAGVS), Glu-32, 40 to 41 (LW), and 61 to 62 (NT). NADP(+) is bound by residues 60 to 61 (TN) and 195 to 198 (SAAD). Residue Lys-492 forms a Glycyl lysine isopeptide (Lys-Gly) (interchain with G-Cter in SUMO) linkage. The helical transmembrane segment at 510-530 (APVSFLIKVLGLLAIVLAFFF) threads the bilayer.

Belongs to the FMO family. FAD serves as cofactor. Requires Mg(2+) as cofactor.

The protein resides in the microsome membrane. It localises to the endoplasmic reticulum membrane. Its function is as follows. Catalyzes the oxidative metabolism of numerous xenobiotics, including mainly therapeutic drugs and insecticides that contain a soft nucleophile, most commonly nitrogen and sulfur and participates to their bioactivation. In Rattus norvegicus (Rat), this protein is Dimethylaniline monooxygenase [N-oxide-forming] 2.